Consider the following 1760-residue polypeptide: Chitin synthase csmB (1760 aa).

Residues 1 to 17 (MSNRFSVYSSHSTGVSS) show a composition bias toward low complexity. The tract at residues 1–23 (MSNRFSVYSSHSTGVSSARPSAP) is disordered. The 374-residue stretch at 1–374 (MSNRFSVYSS…TVSITVVDIP (374 aa)) folds into the Myosin motor domain. A glycan (N-linked (GlcNAc...) asparagine) is linked at Asn-275. The interval 344–363 (LDNDPSTSGGSGPGGQWTDD) is disordered. A region of interest (actin-binding) is located at residue Pro-374. Transmembrane regions (helical) follow at residues 731–751 (IWVGFVWALTFWIPSFALRWI) and 767–787 (LVLMLIILLFNGVVCFYIIAF). Residues Asn-878, Asn-906, and Asn-995 are each glycosylated (N-linked (GlcNAc...) asparagine). The helical transmembrane segment at 1029–1049 (ILLSFTVLICAVILVKFVSAL) threads the bilayer. N-linked (GlcNAc...) asparagine glycosylation is present at Asn-1394. The next 3 membrane-spanning stretches (helical) occupy residues 1419–1439 (FVVLVDLLGTVILPATCVYLG), 1452–1472 (FPMISIVILAGVYGLQAIIFL), and 1480–1500 (IGWMIIYICAYPIYNFILPLY). N-linked (GlcNAc...) asparagine glycans are attached at residues Asn-1584 and Asn-1652. Residues 1702–1758 (GPDEGAITEAIRACLAEVDLDTVTKKQVRALVEQRLQTTLMGDKRTFLDRQIDHELA) form the DEK-C domain.

It in the N-terminal section; belongs to the TRAFAC class myosin-kinesin ATPase superfamily. Myosin family. In the C-terminal section; belongs to the chitin synthase family. Class V subfamily.

Its subcellular location is the cell membrane. The protein localises to the cell septum. It is found in the cell tip. It carries out the reaction [(1-&gt;4)-N-acetyl-beta-D-glucosaminyl](n) + UDP-N-acetyl-alpha-D-glucosamine = [(1-&gt;4)-N-acetyl-beta-D-glucosaminyl](n+1) + UDP + H(+). Polymerizes chitin, a structural polymer of the cell wall and septum, by transferring the sugar moiety of UDP-GlcNAc to the non-reducing end of the growing chitin polymer. Plays an important role in septal growth or maintenance. Mediates colony spore formation. In Aspergillus niger (strain ATCC MYA-4892 / CBS 513.88 / FGSC A1513), this protein is Chitin synthase csmB.